The chain runs to 323 residues: 4-hydroxythreonine-4-phosphate dehydrogenase (323 aa).

Residue Thr-133 coordinates substrate. A divalent metal cation contacts are provided by His-161, His-206, and His-261. 3 residues coordinate substrate: Lys-269, Asn-278, and Arg-287.

This sequence belongs to the PdxA family. In terms of assembly, homodimer. The cofactor is Zn(2+). Requires Mg(2+) as cofactor. Co(2+) serves as cofactor.

The protein resides in the cytoplasm. It carries out the reaction 4-(phosphooxy)-L-threonine + NAD(+) = 3-amino-2-oxopropyl phosphate + CO2 + NADH. It participates in cofactor biosynthesis; pyridoxine 5'-phosphate biosynthesis; pyridoxine 5'-phosphate from D-erythrose 4-phosphate: step 4/5. Catalyzes the NAD(P)-dependent oxidation of 4-(phosphooxy)-L-threonine (HTP) into 2-amino-3-oxo-4-(phosphooxy)butyric acid which spontaneously decarboxylates to form 3-amino-2-oxopropyl phosphate (AHAP). This chain is 4-hydroxythreonine-4-phosphate dehydrogenase, found in Xanthomonas axonopodis pv. citri (strain 306).